Here is a 250-residue protein sequence, read N- to C-terminus: Pyrroloquinoline-quinone synthase (250 aa).

Belongs to the PqqC family.

It catalyses the reaction 6-(2-amino-2-carboxyethyl)-7,8-dioxo-1,2,3,4,7,8-hexahydroquinoline-2,4-dicarboxylate + 3 O2 = pyrroloquinoline quinone + 2 H2O2 + 2 H2O + H(+). The protein operates within cofactor biosynthesis; pyrroloquinoline quinone biosynthesis. Ring cyclization and eight-electron oxidation of 3a-(2-amino-2-carboxyethyl)-4,5-dioxo-4,5,6,7,8,9-hexahydroquinoline-7,9-dicarboxylic-acid to PQQ. The sequence is that of Pyrroloquinoline-quinone synthase from Pseudomonas aeruginosa (strain LESB58).